Here is a 170-residue protein sequence, read N- to C-terminus: MKEEKKLLLQEVEEKISASQGFILLRYLGFSAAYSREFRNSLSGVSAEFEVLKKRIFFKAIENSGFEIDSSDTGGHLGVVFAYDDAVSAAKQVLDFNKQHNDSLVFLAGRIDSANLSGKEVEAVAKLPSMKELRQQVVGLLAAPMSQVVGIMGSALSGVISCIDQKTQKN.

It belongs to the universal ribosomal protein uL10 family. As to quaternary structure, part of the ribosomal stalk of the 50S ribosomal subunit. The N-terminus interacts with L11 and the large rRNA to form the base of the stalk. The C-terminus forms an elongated spine to which L12 dimers bind in a sequential fashion forming a multimeric L10(L12)X complex.

In terms of biological role, forms part of the ribosomal stalk, playing a central role in the interaction of the ribosome with GTP-bound translation factors. This chain is Large ribosomal subunit protein uL10, found in Chlamydia caviae (strain ATCC VR-813 / DSM 19441 / 03DC25 / GPIC) (Chlamydophila caviae).